The following is a 428-amino-acid chain: MSVSKASRTQHSLVPLATLIGRELRSEKVEKPFVKYGQAALAKKGEDYFLIKTDCERVPGDPSSAFSVFGIFDGHNGNSAAIYTKEHLLENVVSAIPQGASRDEWLQALPRALVAGFVKTDIEFQQKGETSGTTVTFVIIDGWTITVASVGDSRCILDTQGGVVSLLTVDHRLEENVEERERITASGGEVGRLNVFGGNEVGPLRCWPGGLCLSRSIGDTDVGEFIVPIPHVKQVKLPDAGGRLIIASDGIWDILSSDVAAKACRGLSADLAAKLVVKEALRTKGLKDDTTCVVVDIVPSGHLSLAPAPMKKQNPFTSFLSRKNHMDTNNKNGNKLSAVGVVEELFEEGSAVLADRLGKDLLSNTETGLLKCAVCQIDESPSEDLSSNGGSIISSASKRWEGPFLCTICKKKKDAMEGKRPSKGSVTT.

Residues 25 to 297 form the PPM-type phosphatase domain; it reads RSEKVEKPFV…DDTTCVVVDI (273 aa). Residues aspartate 73, glycine 74, aspartate 249, and aspartate 288 each contribute to the Mn(2+) site.

Belongs to the PP2C family. Mg(2+) serves as cofactor. It depends on Mn(2+) as a cofactor.

The enzyme catalyses O-phospho-L-seryl-[protein] + H2O = L-seryl-[protein] + phosphate. The catalysed reaction is O-phospho-L-threonyl-[protein] + H2O = L-threonyl-[protein] + phosphate. The polypeptide is Probable protein phosphatase 2C 5 (Arabidopsis thaliana (Mouse-ear cress)).